Reading from the N-terminus, the 361-residue chain is PTI1-like tyrosine-protein kinase At3g15890 (361 aa).

The 290-residue stretch at 39-328 (FNYDNKLGEG…ISELEANPLF (290 aa)) folds into the Protein kinase domain. ATP contacts are provided by residues 45-53 (LGEGRFGSV) and K67. Residue D165 is the Proton acceptor of the active site. Disordered regions lie at residues 195–219 (TGDG…SGKE) and 323–361 (EANP…QQQE). Over residues 351–361 (LEDKDHQQQQE) the composition is skewed to basic and acidic residues.

It belongs to the protein kinase superfamily. Tyr protein kinase family.

It carries out the reaction L-tyrosyl-[protein] + ATP = O-phospho-L-tyrosyl-[protein] + ADP + H(+). This Arabidopsis thaliana (Mouse-ear cress) protein is PTI1-like tyrosine-protein kinase At3g15890.